The chain runs to 207 residues: Large ribosomal subunit protein uL4 (207 aa).

Residues 48-75 are disordered; that stretch reads THAVKNRSAVSGGGRKPWKQKGTGRARA.

This sequence belongs to the universal ribosomal protein uL4 family. Part of the 50S ribosomal subunit.

One of the primary rRNA binding proteins, this protein initially binds near the 5'-end of the 23S rRNA. It is important during the early stages of 50S assembly. It makes multiple contacts with different domains of the 23S rRNA in the assembled 50S subunit and ribosome. Its function is as follows. Forms part of the polypeptide exit tunnel. This Leuconostoc citreum (strain KM20) protein is Large ribosomal subunit protein uL4.